Here is a 966-residue protein sequence, read N- to C-terminus: Leucine--tRNA ligase (966 aa).

The 'HIGH' region signature appears at 41–51; it reads PYLNGNLHAGH. A 'KMSKS' region motif is present at residues 632–636; the sequence is KMSKS. Lys635 serves as a coordination point for ATP.

The protein belongs to the class-I aminoacyl-tRNA synthetase family.

The protein resides in the cytoplasm. It carries out the reaction tRNA(Leu) + L-leucine + ATP = L-leucyl-tRNA(Leu) + AMP + diphosphate. The sequence is that of Leucine--tRNA ligase from Methanosarcina mazei (strain ATCC BAA-159 / DSM 3647 / Goe1 / Go1 / JCM 11833 / OCM 88) (Methanosarcina frisia).